The primary structure comprises 368 residues: Alanine racemase (368 aa).

Lys40 (proton acceptor; specific for D-alanine) is an active-site residue. At Lys40 the chain carries N6-(pyridoxal phosphate)lysine. Substrate is bound at residue Arg134. Residue Tyr263 is the Proton acceptor; specific for L-alanine of the active site. Met310 contributes to the substrate binding site.

Belongs to the alanine racemase family. Pyridoxal 5'-phosphate is required as a cofactor.

It carries out the reaction L-alanine = D-alanine. It participates in amino-acid biosynthesis; D-alanine biosynthesis; D-alanine from L-alanine: step 1/1. Functionally, catalyzes the interconversion of L-alanine and D-alanine. May also act on other amino acids. The sequence is that of Alanine racemase (alr) from Listeria innocua serovar 6a (strain ATCC BAA-680 / CLIP 11262).